The primary structure comprises 405 residues: L-carnitine CoA-transferase (405 aa).

2 residues coordinate CoA: K97 and R104. The active-site Nucleophile is D169.

Belongs to the CoA-transferase III family. CaiB subfamily. In terms of assembly, homodimer.

It localises to the cytoplasm. It catalyses the reaction crotonobetainyl-CoA + (R)-carnitine = crotonobetaine + (R)-carnitinyl-CoA. It carries out the reaction 4-(trimethylamino)butanoyl-CoA + (R)-carnitine = (R)-carnitinyl-CoA + 4-(trimethylamino)butanoate. It participates in amine and polyamine metabolism; carnitine metabolism. Functionally, catalyzes the reversible transfer of the CoA moiety from gamma-butyrobetainyl-CoA to L-carnitine to generate L-carnitinyl-CoA and gamma-butyrobetaine. Is also able to catalyze the reversible transfer of the CoA moiety from gamma-butyrobetainyl-CoA or L-carnitinyl-CoA to crotonobetaine to generate crotonobetainyl-CoA. The sequence is that of L-carnitine CoA-transferase from Salmonella gallinarum (strain 287/91 / NCTC 13346).